The chain runs to 497 residues: Signal recognition particle subunit SRP54 1 (497 aa).

The G-domain stretch occupies residues 1-295; that stretch reads MVLAQLGGSI…DVKPFVSRLL (295 aa). GTP contacts are provided by residues 108–115, 190–194, and 248–251; these read GLQGSGKT, DTSGR, and TKLD. Residues 296–497 form an M-domain region; that stretch reads GMGDLSGLMD…MLGGMGLGGD (202 aa).

This sequence belongs to the GTP-binding SRP family. SRP54 subfamily. As to quaternary structure, component of a signal recognition particle (SRP) complex that consists of a 7SL RNA molecule of 300 nucleotides and six protein subunits: SRP72, SRP68, SRP54, SRP19, SRP14 and SRP9.

It localises to the cytoplasm. Its subcellular location is the endoplasmic reticulum. It catalyses the reaction GTP + H2O = GDP + phosphate + H(+). Functionally, component of the signal recognition particle (SRP) complex, a ribonucleoprotein complex that mediates the cotranslational targeting of secretory and membrane proteins to the endoplasmic reticulum (ER). As part of the SRP complex, associates with the SRP receptor (SR) component SRPRA to target secretory proteins to the endoplasmic reticulum membrane. Binds to the signal sequence of presecretory proteins when they emerge from the ribosomes. Displays basal GTPase activity, and stimulates reciprocal GTPase activation of the SR subunit SRPRA. Forms a guanosine 5'-triphosphate (GTP)-dependent complex with the SR subunit SRPRA. SR compaction and GTPase mediated rearrangement of SR drive SRP-mediated cotranslational protein translocation into the ER. Requires the presence of SRP9/SRP14 and/or SRP19 to stably interact with RNA. The polypeptide is Signal recognition particle subunit SRP54 1 (SRP54-1) (Hordeum vulgare (Barley)).